The sequence spans 141 residues: ATP synthase epsilon chain (141 aa).

This sequence belongs to the ATPase epsilon chain family. F-type ATPases have 2 components, CF(1) - the catalytic core - and CF(0) - the membrane proton channel. CF(1) has five subunits: alpha(3), beta(3), gamma(1), delta(1), epsilon(1). CF(0) has three main subunits: a, b and c.

The protein resides in the cell inner membrane. Produces ATP from ADP in the presence of a proton gradient across the membrane. This is ATP synthase epsilon chain from Pseudomonas syringae pv. syringae (strain B728a).